Here is a 326-residue protein sequence, read N- to C-terminus: 4-hydroxythreonine-4-phosphate dehydrogenase (326 aa).

Residue threonine 132 participates in substrate binding. A divalent metal cation-binding residues include histidine 160, histidine 205, and histidine 260. Lysine 268, asparagine 277, and arginine 286 together coordinate substrate.

Belongs to the PdxA family. In terms of assembly, homodimer. Zn(2+) serves as cofactor. Requires Mg(2+) as cofactor. The cofactor is Co(2+).

The protein resides in the cytoplasm. It catalyses the reaction 4-(phosphooxy)-L-threonine + NAD(+) = 3-amino-2-oxopropyl phosphate + CO2 + NADH. The protein operates within cofactor biosynthesis; pyridoxine 5'-phosphate biosynthesis; pyridoxine 5'-phosphate from D-erythrose 4-phosphate: step 4/5. Functionally, catalyzes the NAD(P)-dependent oxidation of 4-(phosphooxy)-L-threonine (HTP) into 2-amino-3-oxo-4-(phosphooxy)butyric acid which spontaneously decarboxylates to form 3-amino-2-oxopropyl phosphate (AHAP). In Stenotrophomonas maltophilia (strain K279a), this protein is 4-hydroxythreonine-4-phosphate dehydrogenase.